The sequence spans 454 residues: ESX-1 secretion-associated protein EspB (454 aa).

3 disordered regions span residues 17 to 40, 82 to 128, and 391 to 454; these read RADE…SGLT, GEVE…AGES, and AGQG…QDNK. Residues 391–422 are compositionally biased toward gly residues; the sequence is AGQGGGAAGRGMAGGGMGMPMGGAGQGQGGAK.

It belongs to the EspB family. Cleaved at close to the C-terminus during secretion.

The protein localises to the secreted. This chain is ESX-1 secretion-associated protein EspB, found in Mycobacterium marinum (strain ATCC BAA-535 / M).